Consider the following 207-residue polypeptide: Probable nicotinate-nucleotide adenylyltransferase (207 aa).

The protein belongs to the NadD family.

The catalysed reaction is nicotinate beta-D-ribonucleotide + ATP + H(+) = deamido-NAD(+) + diphosphate. Its pathway is cofactor biosynthesis; NAD(+) biosynthesis; deamido-NAD(+) from nicotinate D-ribonucleotide: step 1/1. Functionally, catalyzes the reversible adenylation of nicotinate mononucleotide (NaMN) to nicotinic acid adenine dinucleotide (NaAD). The polypeptide is Probable nicotinate-nucleotide adenylyltransferase (Desulfitobacterium hafniense (strain Y51)).